The sequence spans 506 residues: Glycine--tRNA ligase (506 aa).

Arg-99 and Glu-189 together coordinate substrate. Residues 221-223, 231-236, 305-306, and 364-367 each bind ATP; these read RNE, FRVREF, EL, and GVDR. 236–240 provides a ligand contact to substrate; sequence FEQME. Substrate is bound at residue 360-364; the sequence is EPSAG.

The protein belongs to the class-II aminoacyl-tRNA synthetase family. In terms of assembly, homodimer.

The protein localises to the cytoplasm. The enzyme catalyses tRNA(Gly) + glycine + ATP = glycyl-tRNA(Gly) + AMP + diphosphate. In terms of biological role, catalyzes the attachment of glycine to tRNA(Gly). The polypeptide is Glycine--tRNA ligase (Thermus thermophilus (strain ATCC BAA-163 / DSM 7039 / HB27)).